The primary structure comprises 793 residues: Phenylalanine--tRNA ligase beta subunit (793 aa).

The tRNA-binding domain occupies 39–148 (AGQFTHVIVA…DEAPIGMDLR (110 aa)). The B5 domain maps to 401-477 (PGTVSFLFDT…RLYGYDKLQA (77 aa)). Positions 455, 461, 464, and 465 each coordinate Mg(2+). Positions 698–792 (SKYPQIRRDL…LENEFSILLR (95 aa)) constitute an FDX-ACB domain.

It belongs to the phenylalanyl-tRNA synthetase beta subunit family. Type 1 subfamily. As to quaternary structure, tetramer of two alpha and two beta subunits. It depends on Mg(2+) as a cofactor.

It is found in the cytoplasm. The catalysed reaction is tRNA(Phe) + L-phenylalanine + ATP = L-phenylalanyl-tRNA(Phe) + AMP + diphosphate + H(+). The chain is Phenylalanine--tRNA ligase beta subunit from Legionella pneumophila (strain Paris).